Here is a 514-residue protein sequence, read N- to C-terminus: 2,3-bisphosphoglycerate-independent phosphoglycerate mutase (514 aa).

Mn(2+) is bound by residues Asp14 and Ser64. Ser64 acts as the Phosphoserine intermediate in catalysis. Substrate-binding positions include His125, 155-156, Arg187, Arg193, 263-266, and Lys337; these read RD and RADR. 5 residues coordinate Mn(2+): Asp404, His408, Asp445, His446, and His464.

The protein belongs to the BPG-independent phosphoglycerate mutase family. Monomer. It depends on Mn(2+) as a cofactor.

It carries out the reaction (2R)-2-phosphoglycerate = (2R)-3-phosphoglycerate. It participates in carbohydrate degradation; glycolysis; pyruvate from D-glyceraldehyde 3-phosphate: step 3/5. In terms of biological role, catalyzes the interconversion of 2-phosphoglycerate and 3-phosphoglycerate. In Serratia proteamaculans (strain 568), this protein is 2,3-bisphosphoglycerate-independent phosphoglycerate mutase.